A 388-amino-acid polypeptide reads, in one-letter code: Succinate--CoA ligase [ADP-forming] subunit beta (388 aa).

Positions Lys9–Glu244 constitute an ATP-grasp domain. ATP is bound by residues Lys46, Gly53–Gly55, Glu99, Ala102, and Glu107. Residues Asn199 and Asp213 each coordinate Mg(2+). Substrate contacts are provided by residues Asn264 and Gly321 to Met323.

It belongs to the succinate/malate CoA ligase beta subunit family. As to quaternary structure, heterotetramer of two alpha and two beta subunits. Mg(2+) is required as a cofactor.

It carries out the reaction succinate + ATP + CoA = succinyl-CoA + ADP + phosphate. It catalyses the reaction GTP + succinate + CoA = succinyl-CoA + GDP + phosphate. The protein operates within carbohydrate metabolism; tricarboxylic acid cycle; succinate from succinyl-CoA (ligase route): step 1/1. Its function is as follows. Succinyl-CoA synthetase functions in the citric acid cycle (TCA), coupling the hydrolysis of succinyl-CoA to the synthesis of either ATP or GTP and thus represents the only step of substrate-level phosphorylation in the TCA. The beta subunit provides nucleotide specificity of the enzyme and binds the substrate succinate, while the binding sites for coenzyme A and phosphate are found in the alpha subunit. The protein is Succinate--CoA ligase [ADP-forming] subunit beta of Burkholderia cenocepacia (strain ATCC BAA-245 / DSM 16553 / LMG 16656 / NCTC 13227 / J2315 / CF5610) (Burkholderia cepacia (strain J2315)).